Reading from the N-terminus, the 428-residue chain is MIETLITFIIIFGIIVAIHEYGHLWWAKRSGILVREYAVGMGPKIFAHQAKDGTLYTIRILPLGGYVRLAGWGDDKTEIKKGQAASLVVSKSEVVNPEAENSVSNIVRRINLSEHVELEEAIPMLITEYDFEKELFIEGEVFGEIKRYSVDHDATIIEEDGTEVRIAPLDVQYQSAGVFHKMLTNFGGPLNNFILGIIAFIVLTFVQGGVPSTTNAIGQVEKGTPAYNAGLKAGDKIEAVNGTKTADWNNVVTEISGSKGKELKLEVSRSGKSETLSVTPKKMDGSYRVGIMQSMKTGFFDKITGGFVQAGQSATAIFKALGSLIARPSLDKLGGPVAIYQLSGQAARAGFPAIVYLLAMLSINLGIVNLFPIPVLDGGKIVLNIIEAIRGKALSQEKESIITMVGVVFMLVLFVAVTWNDILRAFVN.

Residue His19 participates in Zn(2+) binding. Residue Glu20 is part of the active site. His23 contributes to the Zn(2+) binding site. The next 3 helical transmembrane spans lie at 188–210 (GPLNNFILGIIAFIVLTFVQGGV), 354–376 (IVYLLAMLSINLGIVNLFPIPVL), and 401–423 (IITMVGVVFMLVLFVAVTWNDIL). Residues 188–282 (GPLNNFILGI…SETLSVTPKK (95 aa)) form the PDZ domain.

It belongs to the peptidase M50B family. Zn(2+) serves as cofactor.

It localises to the cell membrane. The polypeptide is Putative zinc metalloprotease LL2128 (Lactococcus lactis subsp. lactis (strain IL1403) (Streptococcus lactis)).